The following is a 198-amino-acid chain: 7-methyl-GTP pyrophosphatase (198 aa).

The Proton acceptor role is filled by Asp72.

Belongs to the Maf family. YceF subfamily. A divalent metal cation is required as a cofactor.

The protein resides in the cytoplasm. It catalyses the reaction N(7)-methyl-GTP + H2O = N(7)-methyl-GMP + diphosphate + H(+). Its function is as follows. Nucleoside triphosphate pyrophosphatase that hydrolyzes 7-methyl-GTP (m(7)GTP). May have a dual role in cell division arrest and in preventing the incorporation of modified nucleotides into cellular nucleic acids. This Idiomarina loihiensis (strain ATCC BAA-735 / DSM 15497 / L2-TR) protein is 7-methyl-GTP pyrophosphatase.